A 222-amino-acid chain; its full sequence is 26S proteasome non-ATPase regulatory subunit 9 (222 aa).

Residues 108–194 (QARDMAEARE…KPLNVMVIRR (87 aa)) form the PDZ domain. Ser-128 is modified (phosphoserine).

The protein belongs to the proteasome subunit p27 family. As to quaternary structure, interacts with PSMC3. Part of a transient complex (modulator) containing PSMD9, PSMC6 and PSMC3 formed during the assembly of the 26S proteasome.

In terms of biological role, acts as a chaperone during the assembly of the 26S proteasome, specifically of the base subcomplex of the PA700/19S regulatory complex (RC). During the base subcomplex assembly is part of an intermediate PSMD9:PSMC6:PSMC3 module, also known as modulator trimer complex; PSMD9 is released during the further base assembly process. The chain is 26S proteasome non-ATPase regulatory subunit 9 (Psmd9) from Rattus norvegicus (Rat).